We begin with the raw amino-acid sequence, 283 residues long: Phosphatidylserine decarboxylase proenzyme (283 aa).

Catalysis depends on charge relay system; for autoendoproteolytic cleavage activity residues D90, H143, and S248. S248 (schiff-base intermediate with substrate; via pyruvic acid; for decarboxylase activity) is an active-site residue. Pyruvic acid (Ser); by autocatalysis is present on S248.

Belongs to the phosphatidylserine decarboxylase family. PSD-B subfamily. Prokaryotic type I sub-subfamily. In terms of assembly, heterodimer of a large membrane-associated beta subunit and a small pyruvoyl-containing alpha subunit. Pyruvate serves as cofactor. Is synthesized initially as an inactive proenzyme. Formation of the active enzyme involves a self-maturation process in which the active site pyruvoyl group is generated from an internal serine residue via an autocatalytic post-translational modification. Two non-identical subunits are generated from the proenzyme in this reaction, and the pyruvate is formed at the N-terminus of the alpha chain, which is derived from the carboxyl end of the proenzyme. The autoendoproteolytic cleavage occurs by a canonical serine protease mechanism, in which the side chain hydroxyl group of the serine supplies its oxygen atom to form the C-terminus of the beta chain, while the remainder of the serine residue undergoes an oxidative deamination to produce ammonia and the pyruvoyl prosthetic group on the alpha chain. During this reaction, the Ser that is part of the protease active site of the proenzyme becomes the pyruvoyl prosthetic group, which constitutes an essential element of the active site of the mature decarboxylase.

The protein resides in the cell membrane. The enzyme catalyses a 1,2-diacyl-sn-glycero-3-phospho-L-serine + H(+) = a 1,2-diacyl-sn-glycero-3-phosphoethanolamine + CO2. It participates in phospholipid metabolism; phosphatidylethanolamine biosynthesis; phosphatidylethanolamine from CDP-diacylglycerol: step 2/2. Its function is as follows. Catalyzes the formation of phosphatidylethanolamine (PtdEtn) from phosphatidylserine (PtdSer). This is Phosphatidylserine decarboxylase proenzyme from Francisella tularensis subsp. holarctica (strain OSU18).